The chain runs to 582 residues: PTS system lactose-specific EIICB component (582 aa).

The region spanning isoleucine 8–phenylalanine 409 is the PTS EIIC type-3 domain. Transmembrane regions (helical) follow at residues glycine 30–valine 50, glycine 64–threonine 84, isoleucine 103–proline 123, lysine 137–valine 157, valine 176–leucine 196, glycine 222–histidine 242, phenylalanine 283–leucine 303, valine 339–valine 359, and isoleucine 381–valine 401. Residues alanine 453–threonine 473 form a disordered region. Residues valine 464 to threonine 473 are compositionally biased toward low complexity. Residues glutamine 479–asparagine 582 form the PTS EIIB type-3 domain. Cysteine 486 acts as the Phosphocysteine intermediate; for EIIB activity in catalysis. The residue at position 486 (cysteine 486) is a Phosphocysteine; by EIIA.

It localises to the cell membrane. The enzyme catalyses lactose(out) + N(pros)-phospho-L-histidyl-[protein] = lactose 6-phosphate(in) + L-histidyl-[protein]. The phosphoenolpyruvate-dependent sugar phosphotransferase system (sugar PTS), a major carbohydrate active transport system, catalyzes the phosphorylation of incoming sugar substrates concomitantly with their translocation across the cell membrane. The enzyme II LacEF PTS system is involved in lactose transport. This is PTS system lactose-specific EIICB component from Staphylococcus epidermidis (strain ATCC 35984 / DSM 28319 / BCRC 17069 / CCUG 31568 / BM 3577 / RP62A).